The primary structure comprises 333 residues: Glycerol-3-phosphate dehydrogenase [NAD(P)+] (333 aa).

Positions 10, 11, 31, and 105 each coordinate NADPH. 3 residues coordinate sn-glycerol 3-phosphate: K105, G136, and S138. A140 serves as a coordination point for NADPH. 5 residues coordinate sn-glycerol 3-phosphate: K191, D244, S254, R255, and N256. The active-site Proton acceptor is the K191. R255 is an NADPH binding site. NADPH is bound by residues V279 and E281.

It belongs to the NAD-dependent glycerol-3-phosphate dehydrogenase family.

It is found in the cytoplasm. The enzyme catalyses sn-glycerol 3-phosphate + NAD(+) = dihydroxyacetone phosphate + NADH + H(+). It catalyses the reaction sn-glycerol 3-phosphate + NADP(+) = dihydroxyacetone phosphate + NADPH + H(+). It participates in membrane lipid metabolism; glycerophospholipid metabolism. Functionally, catalyzes the reduction of the glycolytic intermediate dihydroxyacetone phosphate (DHAP) to sn-glycerol 3-phosphate (G3P), the key precursor for phospholipid synthesis. This chain is Glycerol-3-phosphate dehydrogenase [NAD(P)+], found in Leptospira biflexa serovar Patoc (strain Patoc 1 / Ames).